The sequence spans 429 residues: Probable M18 family aminopeptidase 2 (429 aa).

Residues His82, His156, and His401 each contribute to the Zn(2+) site.

This sequence belongs to the peptidase M18 family. Zn(2+) serves as cofactor.

The protein is Probable M18 family aminopeptidase 2 of Pseudomonas syringae pv. tomato (strain ATCC BAA-871 / DC3000).